Here is a 304-residue protein sequence, read N- to C-terminus: MANVKNFLTLFIEYLQIEKNYSKYTIVGYISSIEDFERFLHVQGIKGFEDVTYPDVRIFLTEAHEKGLTRRTISKKISALRSFYKFLLREKLVKENPFLLVSLPKQDKRIPKFLYEKELEELFEVSDLSTPLGQRNQALLEFLYATGMRVSELCSLKESDLDLFLDTVLVHGKGRKQRYIPFGSFAREALDLYLQNGRRILLLKAKEPCPFIFLNQRGGPLTPRGVRYILGELVKKTSGTLHIHPHMLRHTFATHLLNEGADLRSVQELLGHSNLSSTQVYTHVSKDMLRKTYMSHHPRAHKGK.

In terms of domain architecture, Core-binding (CB) spans 2-88 (ANVKNFLTLF…ALRSFYKFLL (87 aa)). A Tyr recombinase domain is found at 109–294 (RIPKFLYEKE…SKDMLRKTYM (186 aa)). Active-site residues include arginine 149, lysine 173, histidine 246, arginine 249, and histidine 272. The O-(3'-phospho-DNA)-tyrosine intermediate role is filled by tyrosine 281.

Belongs to the 'phage' integrase family. XerC subfamily. As to quaternary structure, forms a cyclic heterotetrameric complex composed of two molecules of XerC and two molecules of XerD.

Its subcellular location is the cytoplasm. Its function is as follows. Site-specific tyrosine recombinase, which acts by catalyzing the cutting and rejoining of the recombining DNA molecules. The XerC-XerD complex is essential to convert dimers of the bacterial chromosome into monomers to permit their segregation at cell division. It also contributes to the segregational stability of plasmids. The chain is Tyrosine recombinase XerC from Bacillus licheniformis (strain ATCC 14580 / DSM 13 / JCM 2505 / CCUG 7422 / NBRC 12200 / NCIMB 9375 / NCTC 10341 / NRRL NRS-1264 / Gibson 46).